We begin with the raw amino-acid sequence, 797 residues long: MGFIYARKLLLCMAVSIYAIGSTTTTETTTSSSSTSGSGQSTSSGTTNSSSSPTTSPPTTSSSPPTSTHTSSPSSTSTQSSSTAATSSSAPSTASSTTSIPTSTSTETTTTTPTASTTTPTTTTAAPTTAATTTAVTTAASTSAETTTATATATSTPTTTTPTSTTTTTATTTVPTTASTTTDTTTAATTTAATTTAATTTAATTTAATTTAATTTAATTTAATTSSATTAATTTAATTTAATTTAATTTAATTTAATTTGSPTSGSTSTTGASTSTPSASTATSATPTSTSTSAAATTSTPTPTSAATSAESTTEAPTSTPTTDTTTPSEATTATTSPESTTVSASTTSATTTAFTTESHTSPDSSTGSTSTAEPSSTFTLTPSTATPSTDQFTGSSASTESDSTDSSTVPTTGTESITESSSTTEASTNLGSSTYESTEALETPDGNTTSGNTTPSPSPRTPSFADTQQTPDNGVSTQHTTINDHTTANAQKHAGHHRGRAGGRRGSPQGGSHTTPHPDRLTPSPDDTYDDDTNHPNGRNNSIEIVPQLPPDRPIIELGVATLRKNFMEASCTVETNSGLAIFWKIGNASVDAFNRGTTHTRLMRNGVPVYALVSTLRVPWLNVIPLTKITCAACPTNLVAGDGVDLNSCTTKSTTIPCPGQQRTHIFFSAKGDRAVCITSELVSQPTITWSVGSDRLRNDGFSQTWYGIQPGVCGILRSEVRIHRTTWRFGSTSKDYLCEVSASDSKTSDYKVLPNAHSTSNFALVAATTLTVTILCLLCCLYCMLTRPRASVY.

Residues 1-25 (MGFIYARKLLLCMAVSIYAIGSTTT) form the signal peptide. 2 disordered regions span residues 24 to 188 (TTTE…TTAA) and 212 to 549 (AATT…EIVP). Over residues 212-373 (AATTTAATTT…PDSSTGSTST (162 aa)) the composition is skewed to low complexity. Residues 374–394 (AEPSSTFTLTPSTATPSTDQF) show a composition bias toward polar residues. Low complexity-rich tracts occupy residues 395–430 (TGSSASTESDSTDSSTVPTTGTESITESSSTTEAST) and 445–457 (TPDGNTTSGNTTP). A compositionally biased stretch (polar residues) spans 466–492 (FADTQQTPDNGVSTQHTTINDHTTANA). The span at 495–505 (HAGHHRGRAGG) shows a compositional bias: basic residues. N-linked (GlcNAc...) asparagine; by host glycosylation is present at Asn-590. Residues 766–790 (FALVAATTLTVTILCLLCCLYCMLT) traverse the membrane as a helical segment.

Its subcellular location is the virion membrane. Functionally, virulence factor. This Equine herpesvirus 1 (strain Ab4p) (EHV-1) protein is Glycoprotein gp2 (EUs4).